Here is a 131-residue protein sequence, read N- to C-terminus: Fluoride-specific ion channel FluC (131 aa).

3 consecutive transmembrane segments (helical) span residues 3–23 (AAAN…GAWL), 34–54 (IFLT…LLMG), and 62–82 (AVPA…LGGL). Na(+) contacts are provided by Gly80 and Thr83. A helical membrane pass occupies residues 101-121 (WGWLALHAAVHVAGSLLMAWI).

Belongs to the fluoride channel Fluc/FEX (TC 1.A.43) family.

The protein localises to the cell inner membrane. The catalysed reaction is fluoride(in) = fluoride(out). Na(+) is not transported, but it plays an essential structural role and its presence is essential for fluoride channel function. Fluoride-specific ion channel. Important for reducing fluoride concentration in the cell, thus reducing its toxicity. This is Fluoride-specific ion channel FluC from Aromatoleum aromaticum (strain DSM 19018 / LMG 30748 / EbN1) (Azoarcus sp. (strain EbN1)).